The sequence spans 300 residues: Protein SPEAR2 (300 aa).

The span at methionine 1 to serine 11 shows a compositional bias: polar residues. The tract at residues methionine 1–proline 64 is disordered. Positions cysteine 25 to glycine 38 are enriched in basic residues. The SPL signature appears at arginine 37 to glutamate 45. The segment covering glutamate 43 to lysine 54 has biased composition (basic and acidic residues). Over residues proline 55–proline 64 the composition is skewed to low complexity. Residues isoleucine 294–leucine 300 carry the EAR motif.

Homodimer and heterodimer with SPL and SPEARs. Interacts with SPL, SPEAR1, SPEAR3 and SPEAR4. In terms of tissue distribution, expressed in leaves.

Its function is as follows. Adapter-like transcriptional repressor recruiting TPL/TPR corepressors to inhibit TCP transcription factors. May be involved in leaf development. The protein is Protein SPEAR2 of Arabidopsis thaliana (Mouse-ear cress).